Reading from the N-terminus, the 307-residue chain is MAKKKIAISCGDIQGVGLELILKSHKEVSALCEPLYLVHSELLERANQLLDNAYETKTLNAIAIDAPLPLLNSSTIGKVSTQSGAYSFESFKKACELADSKEVDGICTLPINKLAWQQAQIPFVGHTDFLKQRYKDHQIIMMLGCSKLFVGLFSDHVPLSAVSQLIQVKALVKFLLAFQKSTQAKIVQVCGFNPHAGEEGLFGEEDEKILKAIQESNQTLGFECFLGPLPADSAFAPNKRKITPFYVSMSHDVGLAPLKALYFDESINVSLNAPILRASTDHGTAFDIAYQNKANHKSYLNAIKYLA.

H126 and T127 together coordinate substrate. A divalent metal cation is bound by residues H156, H195, and H251. The substrate site is built by K259, N268, and R277.

Belongs to the PdxA family. As to quaternary structure, homodimer. Zn(2+) serves as cofactor. The cofactor is Mg(2+). Co(2+) is required as a cofactor.

Its subcellular location is the cytoplasm. The enzyme catalyses 4-(phosphooxy)-L-threonine + NAD(+) = 3-amino-2-oxopropyl phosphate + CO2 + NADH. It functions in the pathway cofactor biosynthesis; pyridoxine 5'-phosphate biosynthesis; pyridoxine 5'-phosphate from D-erythrose 4-phosphate: step 4/5. Its function is as follows. Catalyzes the NAD(P)-dependent oxidation of 4-(phosphooxy)-L-threonine (HTP) into 2-amino-3-oxo-4-(phosphooxy)butyric acid which spontaneously decarboxylates to form 3-amino-2-oxopropyl phosphate (AHAP). This chain is 4-hydroxythreonine-4-phosphate dehydrogenase, found in Helicobacter pylori (strain J99 / ATCC 700824) (Campylobacter pylori J99).